The primary structure comprises 255 residues: 5'-nucleotidase SurE (255 aa).

Positions 8, 9, 39, and 95 each coordinate a divalent metal cation.

The protein belongs to the SurE nucleotidase family. A divalent metal cation is required as a cofactor.

It is found in the cytoplasm. The catalysed reaction is a ribonucleoside 5'-phosphate + H2O = a ribonucleoside + phosphate. In terms of biological role, nucleotidase that shows phosphatase activity on nucleoside 5'-monophosphates. This chain is 5'-nucleotidase SurE, found in Herpetosiphon aurantiacus (strain ATCC 23779 / DSM 785 / 114-95).